The following is a 31-amino-acid chain: LysM-domain containing protein (31 aa).

A LysM 1 repeat occupies 1–28; it reads YSPSLTDLQSYNAMNGPALKAGDILAVP.

The sequence is that of LysM-domain containing protein from Jatropha curcas (Barbados nut).